The following is a 172-amino-acid chain: Large ribosomal subunit protein uL10 (172 aa).

This sequence belongs to the universal ribosomal protein uL10 family. As to quaternary structure, part of the ribosomal stalk of the 50S ribosomal subunit. The N-terminus interacts with L11 and the large rRNA to form the base of the stalk. The C-terminus forms an elongated spine to which L12 dimers bind in a sequential fashion forming a multimeric L10(L12)X complex.

In terms of biological role, forms part of the ribosomal stalk, playing a central role in the interaction of the ribosome with GTP-bound translation factors. The sequence is that of Large ribosomal subunit protein uL10 from Rhizobium etli (strain CIAT 652).